The chain runs to 225 residues: Probable molybdenum cofactor guanylyltransferase (225 aa).

GTP is bound by residues 20–22 (LAG), Lys33, Asp88, and Asp117. Mg(2+) is bound at residue Asp117.

Belongs to the MobA family. The cofactor is Mg(2+).

The protein localises to the cytoplasm. It carries out the reaction Mo-molybdopterin + GTP + H(+) = Mo-molybdopterin guanine dinucleotide + diphosphate. Functionally, transfers a GMP moiety from GTP to Mo-molybdopterin (Mo-MPT) cofactor (Moco or molybdenum cofactor) to form Mo-molybdopterin guanine dinucleotide (Mo-MGD) cofactor. The chain is Probable molybdenum cofactor guanylyltransferase from Methanosarcina acetivorans (strain ATCC 35395 / DSM 2834 / JCM 12185 / C2A).